Consider the following 270-residue polypeptide: Interleukin-1 alpha (270 aa).

Positions 1–112 (MAKVPDLFED…DTEEEIIKPR (112 aa)) are excised as a propeptide. Lys-82 bears the N6-acetyllysine mark. The segment at 82–86 (KKRRL) is nuclear localization signal (NLS). Ser-87 bears the Phosphoserine mark. Asn-102 and Asn-141 each carry an N-linked (GlcNAc...) asparagine glycan.

This sequence belongs to the IL-1 family. In terms of assembly, monomer. Interacts with TMED10; the interaction mediates the translocation from the cytoplasm into the ERGIC (endoplasmic reticulum-Golgi intermediate compartment) and thereby secretion. Interacts with IL1R1. Interacts with S100A13; this interaction is the first step in the export of IL1A, followed by direct translocation of this complex across the plasma membrane. Acetylated within its nuclear localization sequence, which impacts subcellular localization. In terms of processing, proteolytic processed by CAPN1 in a calcium-dependent manner. Cleavage from 31 kDa precursor to 18 kDa biologically active molecules. Post-translationally, phosphorylated. Phosphorylation greatly enhances susceptibility to digestion and promotes the conversion of pre-IL1A alpha to the biologically active IL1A.

It is found in the nucleus. The protein localises to the cytoplasm. The protein resides in the secreted. Functionally, cytokine constitutively present intracellularly in nearly all resting non-hematopoietic cells that plays an important role in inflammation and bridges the innate and adaptive immune systems. After binding to its receptor IL1R1 together with its accessory protein IL1RAP, forms the high affinity interleukin-1 receptor complex. Signaling involves the recruitment of adapter molecules such as MYD88, IRAK1 or IRAK4. In turn, mediates the activation of NF-kappa-B and the three MAPK pathways p38, p42/p44 and JNK pathways. Within the cell, acts as an alarmin and cell death results in its liberation in the extracellular space after disruption of the cell membrane to induce inflammation and alert the host to injury or damage. In addition to its role as a danger signal, which occurs when the cytokine is passively released by cell necrosis, directly senses DNA damage and acts as signal for genotoxic stress without loss of cell integrity. This chain is Interleukin-1 alpha (IL1A), found in Sus scrofa (Pig).